We begin with the raw amino-acid sequence, 339 residues long: Phenylalanine--tRNA ligase alpha subunit (339 aa).

Mg(2+) is bound at residue Glu-250.

Belongs to the class-II aminoacyl-tRNA synthetase family. Phe-tRNA synthetase alpha subunit type 1 subfamily. As to quaternary structure, tetramer of two alpha and two beta subunits. The cofactor is Mg(2+).

The protein resides in the cytoplasm. It carries out the reaction tRNA(Phe) + L-phenylalanine + ATP = L-phenylalanyl-tRNA(Phe) + AMP + diphosphate + H(+). In Christiangramia forsetii (strain DSM 17595 / CGMCC 1.15422 / KT0803) (Gramella forsetii), this protein is Phenylalanine--tRNA ligase alpha subunit.